The chain runs to 469 residues: MVRVRFAPSPTGFLHVGGARTALFNFLFARKEKGKFILRIEDTDLERSEREYEEKLMESLRWLGLLWDEGPDVGGDHGPYMQSERVEIYREHAERLVKEGKAYYVYAYPEEIEEMREKLLSEGKAPHYSQEMFEKFDTPERRREYEEKGLRPAVFFKMPRKDYVLNDVVKGEVVFKTGAIGDFVIMRSNGLPTYNFACVVDDMLMEITHVIRGDDHLSNTLRQLALYEAFEKAPPVFAHVSTILGPDGKKLSKRHGATSVEAFRDMGYLPEALVNYLALLGWSHPEGKELLTLEELISSFSLDRLSPNPAIFDPQKLKWMNGYYLRNMPIEKLAELAKPFFEKAGIKIIDEEYFKKVLEITKERVEVLSEFPEESRFFFEDPAPVEIPEEMKEVFSQLKEELQNVRWTMEEITPVFKKVLKQHGVKPKEFYMTLRRVLTGREEGPELVNIIPLLGKEIFLRRIERSLGG.

Positions 8-18 (PSPTGFLHVGG) match the 'HIGH' region motif. The short motif at 250–254 (KLSKR) is the 'KMSKS' region element. Residue lysine 253 coordinates ATP.

Belongs to the class-I aminoacyl-tRNA synthetase family. Glutamate--tRNA ligase type 1 subfamily. As to quaternary structure, monomer.

It is found in the cytoplasm. It carries out the reaction tRNA(Glu) + L-glutamate + ATP = L-glutamyl-tRNA(Glu) + AMP + diphosphate. Catalyzes the attachment of glutamate to tRNA(Glu) in a two-step reaction: glutamate is first activated by ATP to form Glu-AMP and then transferred to the acceptor end of tRNA(Glu). The polypeptide is Glutamate--tRNA ligase 2 (Thermotoga sp. (strain RQ2)).